The sequence spans 236 residues: 27 kDa hemolymph protein (236 aa).

An N-terminal signal peptide occupies residues 1–17 (MMWKLIIVTILAVGVLC).

In terms of assembly, monomer. Hemolymph.

Its subcellular location is the secreted. The chain is 27 kDa hemolymph protein from Galleria mellonella (Greater wax moth).